The following is a 1686-amino-acid chain: A disintegrin and metalloproteinase with thrombospondin motifs 7 (1686 aa).

A signal peptide spans 1-27 (MPGGPSPRSPAPLLRPLLLLLCALAPG). A propeptide spanning residues 28 to 236 (APGPAPGRAT…RPRLRRLHQR (209 aa)) is cleaved from the precursor. Residue Asn-94 is glycosylated (N-linked (GlcNAc...) asparagine). The short motif at 202-209 (STCGVQVY) is the Cysteine switch element. Cys-204 lines the Zn(2+) pocket. The Peptidase M12B domain maps to 242 to 452 (KWVETLVVAD…GWGLCLDDPP (211 aa)). Disulfide bonds link Cys-318–Cys-372, Cys-347–Cys-354, Cys-366–Cys-447, Cys-405–Cys-431, Cys-474–Cys-497, Cys-485–Cys-503, Cys-492–Cys-522, Cys-516–Cys-527, Cys-550–Cys-587, Cys-554–Cys-592, and Cys-565–Cys-577. His-388 provides a ligand contact to Zn(2+). The active site involves Glu-389. Positions 392 and 398 each coordinate Zn(2+). Residues 462–537 (VPPGVLYDVS…VPVGFRPEAV (76 aa)) enclose the Disintegrin domain. Residues 538-593 (DGGWSGWSAWSICSRSCGMGVQSAERQCTQPTPKYKGRYCVGERKRFRLCNLQACP) enclose the TSP type-1 1 domain. N-linked (GlcNAc...) asparagine glycosylation is found at Asn-693 and Asn-778. The spacer stretch occupies residues 698 to 809 (HTVSGTFEEA…PGVHYEYTIH (112 aa)). TSP type-1 domains lie at 821 to 880 (PVFS…QPCP), 881 to 940 (ARWW…NRHV), and 942 to 995 (CPAT…PLCR). Disordered stretches follow at residues 1024-1043 (HHLA…TMGN), 1080-1257 (PSEE…SPDV), and 1344-1396 (LGHM…PLAP). Positions 1182–1205 (DGLQTPATPESQNDFPVGKDSQSQ) are enriched in polar residues. Positions 1210-1226 (WRDRTNEVFKDDEEPKG) are enriched in basic and acidic residues. A compositionally biased stretch (low complexity) spans 1360–1375 (PESLSPEVPLSSRLLS). TSP type-1 domains are found at residues 1411–1459 (RNAG…RRCH), 1462–1522 (PCAT…QPCL), 1523–1567 (SWYT…PCNT), and 1569–1629 (PCTQ…EDCE). Positions 1632–1672 (EPPRCERDRLSFGFCETLRLLGRCQLPTIRTQCCRSCSPPS) constitute a PLAC domain. The disordered stretch occupies residues 1666–1686 (RSCSPPSHGAPSRGHQRVARR).

Interacts with COMP. The cofactor is Zn(2+). In terms of processing, N-glycosylated. Can be O-fucosylated by POFUT2 on a serine or a threonine residue found within the consensus sequence C1-X(2)-(S/T)-C2-G of the TSP type-1 repeat domains where C1 and C2 are the first and second cysteine residue of the repeat, respectively. Fucosylated repeats can then be further glycosylated by the addition of a beta-1,3-glucose residue by the glucosyltransferase, B3GALTL. Fucosylation mediates the efficient secretion of ADAMTS family members. Can also be C-glycosylated with one or two mannose molecules on tryptophan residues within the consensus sequence W-X-X-W of the TPRs. N- and C-glycosylations can also facilitate secretion. Post-translationally, O-glycosylated proteoglycan; contains chondroitin sulfate. May be cleaved by a furin endopeptidase. The precursor is sequentially processed. As to expression, expressed in heart, brain, placenta, lung, liver, skeletal muscle, kidney and pancreas. Detected in meniscus, bone, tendon, cartilage, synovium, fat and ligaments.

The protein resides in the secreted. Its subcellular location is the extracellular space. The protein localises to the extracellular matrix. Functionally, metalloprotease. Was previously shown to degrade COMP. However, a later study found no activity against COMP. This is A disintegrin and metalloproteinase with thrombospondin motifs 7 (ADAMTS7) from Homo sapiens (Human).